A 208-amino-acid polypeptide reads, in one-letter code: Large ribosomal subunit protein eL13 (208 aa).

It belongs to the eukaryotic ribosomal protein eL13 family.

The chain is Large ribosomal subunit protein eL13 (RPL13) from Chlamydomonas sp. (strain W80).